A 40-amino-acid chain; its full sequence is MPPRRKRVSSAPRRRRRTYRRTTAHKHQDRPVHRRRRRRH.

Residues 1–40 (MPPRRKRVSSAPRRRRRTYRRTTAHKHQDRPVHRRRRRRH) form a disordered region.

Testis.

It localises to the nucleus. Its subcellular location is the chromosome. Protamines substitute for histones in the chromatin of sperm during the haploid phase of spermatogenesis. They compact sperm DNA into a highly condensed, stable and inactive complex. The polypeptide is Protamine-1 (PBP1) (Bufo japonicus (Japanese common toad)).